The sequence spans 300 residues: Cation-efflux pump FieF (300 aa).

The next 4 membrane-spanning stretches (helical) occupy residues 12 to 32, 39 to 59, 82 to 102, and 114 to 134; these read AAIA…FAWW, ILAA…NLLV, AALA…LTGI, and PGVG…LVSF. Residues Asp45 and Asp49 each coordinate Zn(2+). Residues His153 and Asp157 each contribute to the Zn(2+) site. 2 helical membrane passes run 156-176 and 178-198; these read SDVM…YGWH and ADAL…LRMG.

This sequence belongs to the cation diffusion facilitator (CDF) transporter (TC 2.A.4) family. FieF subfamily. As to quaternary structure, homodimer.

It is found in the cell inner membrane. The enzyme catalyses Zn(2+)(in) + H(+)(out) = Zn(2+)(out) + H(+)(in). It catalyses the reaction Cd(2+)(in) + H(+)(out) = Cd(2+)(out) + H(+)(in). It carries out the reaction Fe(2+)(in) + H(+)(out) = Fe(2+)(out) + H(+)(in). In terms of biological role, divalent metal cation transporter which exports Zn(2+), Cd(2+) and possibly Fe(2+). May be involved in zinc and iron detoxification by efflux. In Escherichia coli O7:K1 (strain IAI39 / ExPEC), this protein is Cation-efflux pump FieF.